We begin with the raw amino-acid sequence, 355 residues long: MSIVLAIETSCDETAVAIVNNRKVLGNVVASQIDIHREFGGVVPEVASRHHLESINACIDTAFEQSGLSWSEIEAIATTCAPGLVGALLLGAAAGKTLAMIHNKPFIGVHHLEGHIYASYLSQPELEPPFLCLLVSGGHTSFIEVRGCGEYKLLGETRDDAAGEAFDKVARLLRVGYPGGPVIDRLAKTGDPQAFKLPEGRISLPGGGYHPYDCSFSGLKTAVLRLVQQFETQGKAVPVADIAASFQYTVAQALTKRAVRCAGDRQLQTIVVGGGVAANSGLRQILTAAAAEAGIQVYFPPLKFCTDNAAMIACAAAEHFQKGDRSRLDLPVASRLPITQVQTLYTPLVPLKGKS.

Residues His111 and His115 each coordinate Fe cation. Residues 134 to 138, Asp167, Gly180, Asp184, and Asn279 each bind substrate; that span reads LVSGG. Fe cation is bound at residue Asp307.

Belongs to the KAE1 / TsaD family. Fe(2+) serves as cofactor.

Its subcellular location is the cytoplasm. It carries out the reaction L-threonylcarbamoyladenylate + adenosine(37) in tRNA = N(6)-L-threonylcarbamoyladenosine(37) in tRNA + AMP + H(+). Required for the formation of a threonylcarbamoyl group on adenosine at position 37 (t(6)A37) in tRNAs that read codons beginning with adenine. Is involved in the transfer of the threonylcarbamoyl moiety of threonylcarbamoyl-AMP (TC-AMP) to the N6 group of A37, together with TsaE and TsaB. TsaD likely plays a direct catalytic role in this reaction. In Picosynechococcus sp. (strain ATCC 27264 / PCC 7002 / PR-6) (Agmenellum quadruplicatum), this protein is tRNA N6-adenosine threonylcarbamoyltransferase.